The primary structure comprises 576 residues: MRASKYHLNTLKEAPAEAEIASHQLMTRAGMIRKLAGGIYTYMPLGLKVIRKIEGIVREEMNAAGAIELLMPVVQPAELWMESGRWEQYGAELLRIKDRHQRDFVLQPTSEEVITDIARNEIQSYRQLPLNFYHIQTKFRDERRPRFGLMRGREFTMKDAYSFDRDEAGAQRSYDIMYAAYQRIFQRLGLEFRAVAADTGSIGGSRSHEFQVIADTGEDLIVYNPESDYAANIELAEAPALLATRAAPGQDLEAVPTPGAAKCEDVAKLLDLPLARTIKSIVLAVDQPEGPAQVWLLLLRGDHELNEIKAGKLPGLAGFRFATETEILDHFGCKPGYLGPIKTARPVHVVADRTVANMADFVCGANREDYHYQGANWARDLPEPELVADLRNVVEGDPSPDGKGALSIQRGIEVGHVFFLGTKYSEALKATFLDDNGKPAVLQMGCYGIGVTRIVGAAIEQNHDARGIIWPRAIAPYEVVICPVGWGKSETVRDTALALYEALRARGVDVMLDDRDSRPGVMFAEWELIGVPLRVTVGERGLNEGVVELQARREAEAAKVPVDQALAQTLAKLDLL.

This sequence belongs to the class-II aminoacyl-tRNA synthetase family. ProS type 1 subfamily. In terms of assembly, homodimer.

Its subcellular location is the cytoplasm. The catalysed reaction is tRNA(Pro) + L-proline + ATP = L-prolyl-tRNA(Pro) + AMP + diphosphate. Its function is as follows. Catalyzes the attachment of proline to tRNA(Pro) in a two-step reaction: proline is first activated by ATP to form Pro-AMP and then transferred to the acceptor end of tRNA(Pro). As ProRS can inadvertently accommodate and process non-cognate amino acids such as alanine and cysteine, to avoid such errors it has two additional distinct editing activities against alanine. One activity is designated as 'pretransfer' editing and involves the tRNA(Pro)-independent hydrolysis of activated Ala-AMP. The other activity is designated 'posttransfer' editing and involves deacylation of mischarged Ala-tRNA(Pro). The misacylated Cys-tRNA(Pro) is not edited by ProRS. This chain is Proline--tRNA ligase, found in Bordetella bronchiseptica (strain ATCC BAA-588 / NCTC 13252 / RB50) (Alcaligenes bronchisepticus).